The primary structure comprises 401 residues: 4-hydroxy-3-methylbut-2-en-1-yl diphosphate synthase (ferredoxin) (401 aa).

[4Fe-4S] cluster is bound by residues cysteine 306, cysteine 309, cysteine 340, and glutamate 347.

Belongs to the IspG family. Requires [4Fe-4S] cluster as cofactor.

It carries out the reaction (2E)-4-hydroxy-3-methylbut-2-enyl diphosphate + 2 oxidized [2Fe-2S]-[ferredoxin] + H2O = 2-C-methyl-D-erythritol 2,4-cyclic diphosphate + 2 reduced [2Fe-2S]-[ferredoxin] + H(+). Its pathway is isoprenoid biosynthesis; isopentenyl diphosphate biosynthesis via DXP pathway; isopentenyl diphosphate from 1-deoxy-D-xylulose 5-phosphate: step 5/6. Functionally, converts 2C-methyl-D-erythritol 2,4-cyclodiphosphate (ME-2,4cPP) into 1-hydroxy-2-methyl-2-(E)-butenyl 4-diphosphate. The protein is 4-hydroxy-3-methylbut-2-en-1-yl diphosphate synthase (ferredoxin) of Synechococcus sp. (strain CC9902).